Here is a 298-residue protein sequence, read N- to C-terminus: Tyrosine recombinase XerC (298 aa).

The Core-binding (CB) domain maps to 2-88 (TDLHTDVERY…ALRSFFDWLV (87 aa)). One can recognise a Tyr recombinase domain in the interval 109–288 (HLPKNIDVDD…DFQHLASVYD (180 aa)). Catalysis depends on residues arginine 148, lysine 172, histidine 240, arginine 243, and histidine 266. The active-site O-(3'-phospho-DNA)-tyrosine intermediate is the tyrosine 275.

This sequence belongs to the 'phage' integrase family. XerC subfamily. Forms a cyclic heterotetrameric complex composed of two molecules of XerC and two molecules of XerD, in which XerC interacts with XerD via its C-terminal region, XerD interacts with XerC via its C-terminal region and so on.

It is found in the cytoplasm. Its activity is regulated as follows. FtsK may regulate the catalytic switch between XerC and XerD in the heterotetrameric complex during the two steps of the recombination process. Site-specific tyrosine recombinase, which acts by catalyzing the cutting and rejoining of the recombining DNA molecules. Binds cooperatively to specific DNA consensus sequences that are separated from XerD binding sites by a short central region, forming the heterotetrameric XerC-XerD complex that recombines DNA substrates. The complex is essential to convert dimers of the bacterial chromosome into monomers to permit their segregation at cell division. It also contributes to the segregational stability of plasmids. In the complex XerC specifically exchanges the top DNA strands. The sequence is that of Tyrosine recombinase XerC from Escherichia coli O157:H7.